The sequence spans 239 residues: Small ribosomal subunit protein uS2 (239 aa).

The protein belongs to the universal ribosomal protein uS2 family.

The chain is Small ribosomal subunit protein uS2 from Francisella tularensis subsp. novicida (strain U112).